Consider the following 341-residue polypeptide: Ribosomal RNA small subunit methyltransferase H (341 aa).

S-adenosyl-L-methionine-binding positions include 47–49 (GGY), Asp-64, Phe-91, Asp-109, and Gln-116.

Belongs to the methyltransferase superfamily. RsmH family.

It localises to the cytoplasm. It catalyses the reaction cytidine(1402) in 16S rRNA + S-adenosyl-L-methionine = N(4)-methylcytidine(1402) in 16S rRNA + S-adenosyl-L-homocysteine + H(+). Specifically methylates the N4 position of cytidine in position 1402 (C1402) of 16S rRNA. The sequence is that of Ribosomal RNA small subunit methyltransferase H from Rhizobium leguminosarum bv. trifolii (strain WSM2304).